Consider the following 99-residue polypeptide: Small integral membrane protein 9 (99 aa).

The signal sequence occupies residues 1–26 (MEPQKLLIIGFLLCSLTCLLLETVAS). The Extracellular portion of the chain corresponds to 27-73 (SPLPLSALGIQEKTGSKPRSGGNHRSWLNNFRDYLWQLIKSALPPAA). A helical transmembrane segment spans residues 74 to 94 (IVAFLLTSALMGILCCFTILV). Residues 95 to 99 (VDPVH) lie on the Cytoplasmic side of the membrane.

It is found in the cell membrane. The protein is Small integral membrane protein 9 (SMIM9) of Homo sapiens (Human).